The following is a 161-amino-acid chain: 3-isopropylmalate dehydratase small subunit (161 aa).

The protein belongs to the LeuD family. LeuD type 2 subfamily. As to quaternary structure, heterodimer of LeuC and LeuD.

The enzyme catalyses (2R,3S)-3-isopropylmalate = (2S)-2-isopropylmalate. The protein operates within amino-acid biosynthesis; L-leucine biosynthesis; L-leucine from 3-methyl-2-oxobutanoate: step 2/4. In terms of biological role, catalyzes the isomerization between 2-isopropylmalate and 3-isopropylmalate, via the formation of 2-isopropylmaleate. This Metallosphaera sedula (strain ATCC 51363 / DSM 5348 / JCM 9185 / NBRC 15509 / TH2) protein is 3-isopropylmalate dehydratase small subunit.